A 404-amino-acid chain; its full sequence is Formate-dependent phosphoribosylglycinamide formyltransferase (404 aa).

N(1)-(5-phospho-beta-D-ribosyl)glycinamide is bound by residues 27–28 and Glu-87; that span reads EL. ATP-binding positions include Arg-120, Lys-162, 167-172, 202-205, and Glu-210; these read SSGKGQ and EGFI. The ATP-grasp domain occupies 125-320; that stretch reads RLAAETLGLP…EFELHARALL (196 aa). Residues Glu-279 and Glu-291 each coordinate Mg(2+). N(1)-(5-phospho-beta-D-ribosyl)glycinamide contacts are provided by residues Asp-298, Lys-367, and 374–375; that span reads RR.

It belongs to the PurK/PurT family. Homodimer.

It catalyses the reaction N(1)-(5-phospho-beta-D-ribosyl)glycinamide + formate + ATP = N(2)-formyl-N(1)-(5-phospho-beta-D-ribosyl)glycinamide + ADP + phosphate + H(+). It participates in purine metabolism; IMP biosynthesis via de novo pathway; N(2)-formyl-N(1)-(5-phospho-D-ribosyl)glycinamide from N(1)-(5-phospho-D-ribosyl)glycinamide (formate route): step 1/1. In terms of biological role, involved in the de novo purine biosynthesis. Catalyzes the transfer of formate to 5-phospho-ribosyl-glycinamide (GAR), producing 5-phospho-ribosyl-N-formylglycinamide (FGAR). Formate is provided by PurU via hydrolysis of 10-formyl-tetrahydrofolate. The chain is Formate-dependent phosphoribosylglycinamide formyltransferase from Bordetella pertussis (strain Tohama I / ATCC BAA-589 / NCTC 13251).